Here is a 502-residue protein sequence, read N- to C-terminus: Lysine--tRNA ligase (502 aa).

Mg(2+) contacts are provided by E410 and E417.

Belongs to the class-II aminoacyl-tRNA synthetase family. Homodimer. It depends on Mg(2+) as a cofactor.

The protein resides in the cytoplasm. It carries out the reaction tRNA(Lys) + L-lysine + ATP = L-lysyl-tRNA(Lys) + AMP + diphosphate. The sequence is that of Lysine--tRNA ligase from Photobacterium profundum (strain SS9).